Here is a 286-residue protein sequence, read N- to C-terminus: Urease accessory protein UreD 2 (286 aa).

Belongs to the UreD family. UreD, UreF and UreG form a complex that acts as a GTP-hydrolysis-dependent molecular chaperone, activating the urease apoprotein by helping to assemble the nickel containing metallocenter of UreC. The UreE protein probably delivers the nickel.

The protein localises to the cytoplasm. In terms of biological role, required for maturation of urease via the functional incorporation of the urease nickel metallocenter. The sequence is that of Urease accessory protein UreD 2 from Bradyrhizobium sp. (strain ORS 278).